A 351-amino-acid chain; its full sequence is Phosphate acyltransferase (351 aa).

It belongs to the PlsX family. In terms of assembly, homodimer. Probably interacts with PlsY.

It localises to the cytoplasm. It carries out the reaction a fatty acyl-[ACP] + phosphate = an acyl phosphate + holo-[ACP]. The protein operates within lipid metabolism; phospholipid metabolism. Catalyzes the reversible formation of acyl-phosphate (acyl-PO(4)) from acyl-[acyl-carrier-protein] (acyl-ACP). This enzyme utilizes acyl-ACP as fatty acyl donor, but not acyl-CoA. This chain is Phosphate acyltransferase, found in Neisseria meningitidis serogroup A / serotype 4A (strain DSM 15465 / Z2491).